A 483-amino-acid chain; its full sequence is BTB/POZ domain and ankyrin repeat-containing protein NBCL (483 aa).

The 85-residue stretch at 25–109 (SDVTFSVEGR…LYSGQVSIVP (85 aa)) folds into the BTB domain. The C2HC NPR-type zinc finger occupies 115–129 (RPNCGERACWHTHCT). Residues Cys-118, Cys-123, His-125, and Cys-128 each contribute to the Zn(2+) site. ANK repeat units lie at residues 254 to 283 (QKIRRMRRALDSSDVELVKLMVMGEGLNLD), 284 to 313 (EALALPYAVENCSREVVKALLELGAADVNY), 318 to 347 (SGKTPLHIAAEMVSPDMVAVLLDHHADPNV), and 351 to 385 (DGVTPLDILRTLTSDFLFKGAVPGLTHIEPNKLRL). Positions 401 to 437 (EGNANANSSNNNNAPCSAATPIYPPMNEDHNSSSSNA) are disordered. Residues 403-419 (NANANSSNNNNAPCSAA) show a composition bias toward low complexity.

Belongs to the plant 'ANKYRIN-BTB/POZ' family. 'NOOT-BOP-COCH-like' (NBCL) subfamily. Homodimer. Interacts with APP1 around the plasma membrane and in the nucleus; this interaction disturbs APP1-mediated regulation of the nuclear transcription factor Y subunit (NF-YA1). As to expression, mainly expressed in root nodules, to a lesser extent in shoot apical meristems (SAM) and root meristems (RM), and barely in leaves, non-nodulating roots and root apical meristems (RAM).

Its subcellular location is the nucleus. The protein resides in the cytoplasm. The protein localises to the cell membrane. Its pathway is protein modification; protein ubiquitination. Its function is as follows. May act as a substrate-specific adapter of an E3 ubiquitin-protein ligase complex (CUL3-RBX1-BTB) which mediates the ubiquitination and subsequent proteasomal degradation of target proteins. Transcriptional co-regulator involved in the promotion of leaf and floral meristem fate and determinacy. Required for the abscission of senescent organs, probably by regulating the cell wall disorganization in abscission zones (AZs, e.g. pulvini at the base of leaves). Involved in the coordination of the symbiotic nodule developmental program; promotes the formation of root nodules by interacting directly with APP1 to modulate the expression of the nuclear transcription factor Y subunit (NF-YA1), a key nodulin. Necessary for the robust maintenance of nodule identity throughout the nodule developmental program. This chain is BTB/POZ domain and ankyrin repeat-containing protein NBCL, found in Lotus japonicus (Lotus corniculatus var. japonicus).